Consider the following 99-residue polypeptide: NADH-quinone oxidoreductase subunit K (99 aa).

A run of 3 helical transmembrane segments spans residues 3-23 (ILFS…GILI), 28-48 (LIVF…FVAF), and 59-79 (IWVF…LAII).

It belongs to the complex I subunit 4L family. NDH-1 is composed of 14 different subunits. Subunits NuoA, H, J, K, L, M, N constitute the membrane sector of the complex.

Its subcellular location is the cell inner membrane. The catalysed reaction is a quinone + NADH + 5 H(+)(in) = a quinol + NAD(+) + 4 H(+)(out). In terms of biological role, NDH-1 shuttles electrons from NADH, via FMN and iron-sulfur (Fe-S) centers, to quinones in the respiratory chain. The immediate electron acceptor for the enzyme in this species is believed to be ubiquinone. Couples the redox reaction to proton translocation (for every two electrons transferred, four hydrogen ions are translocated across the cytoplasmic membrane), and thus conserves the redox energy in a proton gradient. This Protochlamydia amoebophila (strain UWE25) protein is NADH-quinone oxidoreductase subunit K.